A 518-amino-acid polypeptide reads, in one-letter code: Filamentous growth regulator 15 (518 aa).

Residues methionine 1–asparagine 41 are compositionally biased toward polar residues. Disordered regions lie at residues methionine 1–arginine 63, valine 75–lysine 101, and lysine 261–arginine 307. Low complexity predominate over residues glutamine 42–glutamine 52. The segment covering proline 77 to valine 95 has biased composition (polar residues). Residues serine 262–valine 274 show a composition bias toward basic residues. Residues serine 283 to asparagine 298 show a composition bias toward low complexity. A C2H2-type zinc finger spans residues histidine 374 to histidine 406. The interval arginine 492 to lysine 518 is disordered. Acidic residues predominate over residues serine 505–lysine 518.

Its subcellular location is the nucleus. Functionally, probable transcription factor involved in the regulation of filamentous growth. This chain is Filamentous growth regulator 15 (FGR15), found in Candida albicans (strain SC5314 / ATCC MYA-2876) (Yeast).